The primary structure comprises 311 residues: MGYLNSVLSSSSQVHSDDGPVSGGGLSQNGKFSYGYASSPGKRSSMEDFYETRIDGVEGEIVGLFGVFDGHGGARAAEYVKQNLFSNLIRHPKFISDTTAAIADAYNQTDSEFLKSENSQNRDAGSTASTAILVGDRLLVANVGDSRAVICRGGNAIAVSRDHKPDQSDERQRIEDAGGFVMWAGTWRVGGVLAVSRAFGDRLLKQYVVADPEIQEEKVDSSLEFLILASDGLWDVVSNEEAVGMIKAIEDPEEGAKRLMMEAYQRGSADNITCVVVRFFSDQAGGIGSSSTNIPIDHGIVPDRISGDSST.

Over residues methionine 1–valine 14 the composition is skewed to low complexity. Residues methionine 1–leucine 26 are disordered. The PPM-type phosphatase domain maps to serine 33 to phenylalanine 279. Residues aspartate 69, glycine 70, aspartate 231, and aspartate 270 each coordinate Mn(2+).

It belongs to the PP2C family. As to quaternary structure, interacts with the Pseudomonas syringae pv. maculicola effector HopW1-1 (via C-terminus). The cofactor is Mg(2+). It depends on Mn(2+) as a cofactor.

It catalyses the reaction O-phospho-L-seryl-[protein] + H2O = L-seryl-[protein] + phosphate. The catalysed reaction is O-phospho-L-threonyl-[protein] + H2O = L-threonyl-[protein] + phosphate. Its activity is regulated as follows. Inhibited by sodium fluoride (NaF). In terms of biological role, protein phosphatase that modulates defense response to pathogenic bacteria, conferring resistance and promoting salicylic acid (SA) accumulation. This Arabidopsis thaliana (Mouse-ear cress) protein is Probable protein phosphatase 2C 59 (WIN2).